Reading from the N-terminus, the 1081-residue chain is MDSLNDIIDHQTFSQELVEDASEFITVGHHSERPSQSSQQPNSGQDLTMSMQDIISCPVKHRTCSASGSGSASGSDSVVMVIDALGQGNRQSAYQIVPQQLQQRNMPLPFGLLERDRQHMQHGREVNTSPVDFVSSDINLDGLTVDADVSQTDHSQETAVKQEQKLLIVQSKSQDQSHRRIRMLVDVSSVNSGLGVHVDDMDEISSDGVGCDDEGVTLSHQHLLEQEEQFGLTSHHPHLQPHTQIIHGLHQRSTHSEMGLDNGHGEVLSVIVHSQDSDKEDCEENDDGDAEGDLENEDDDERDSRSREQLLSHSSYQTLTSVNDRLSSPGFSQTSYATLTPIQPLPPISTMSEKFAYSGHISGGDSGDTDVNGDGAGGGVVEVGEVTNQSSEATGTVSISSGNATSSVCSNNDCSSFSALSMPIGSGHLGLGVLSGVQSPFSSYEKLSSMISPPPNNYLVSCDLHSSVSGRVINSSHLQLSHNGNKKESGTHEHTHRPADVNGGKFSYTGHISRGDSVDNDVNGEKFSFSDHISGGDSGDEDANREKFIYSDHISEGENGPDVNSGTNWLQMHSEREVRLHMPVPAELEARFHISSERRTRLNVPPARGSLSRHLAPNAPICPADWKADDWKHSNAGVVSLTADMPVVVSLTPTPPPLRDDSVSGIKQNERSSPGHREQYFLDKSQEPSSVVADQCSPGINGTPQSVCVIHQQSPSALGNGFQSSSQQAKVSSCASPKGTVSSGGAVSNRIANSSDMEEINTKDLAQRISAELKRYSIPQAIFAQRVLCRSQGTLSDLLRNPKPWSKLKSGRETFRRMYKWLQEPEFQRMSALRMAAAQIPQRAPLSSGMSLGSATGPSGSTGTIPTDLDPHGGPTMIQNPLTNESDSSPASTPVTSVLVGSVVSCRRKEEPQIEQMPQPKKPRLVFTDLQRRTLQAIFKETKRPSKEMQVTIARQLGLEPTTVGNFFMNARRRSMDKWRDDDSKSTMHVAHSRQQQDEQQKDNAHTHSQSQIQDQNHSQNQAIHNSMSQDPYSNLHTTAMSPLGAFDEDADMDLELESHDFDLVDPDEHGDTNDPNGDML.

Disordered stretches follow at residues 274 to 326 (SQDS…NDRL), 481 to 504 (SHNG…VNGG), and 653 to 688 (PTPP…SQEP). Acidic residues predominate over residues 278-301 (DKEDCEENDDGDAEGDLENEDDDE). A compositionally biased stretch (polar residues) spans 311–326 (LSHSSYQTLTSVNDRL). Basic and acidic residues-rich tracts occupy residues 485–499 (NKKE…HRPA) and 658–686 (LRDD…DKSQ). Residues 751–837 (IANSSDMEEI…QRMSALRMAA (87 aa)) constitute a DNA-binding region (CUT). The disordered stretch occupies residues 844-875 (APLSSGMSLGSATGPSGSTGTIPTDLDPHGGP). Residues 851 to 867 (SLGSATGPSGSTGTIPT) are compositionally biased toward low complexity. The segment at residues 918-977 (PQPKKPRLVFTDLQRRTLQAIFKETKRPSKEMQVTIARQLGLEPTTVGNFFMNARRRSMD) is a DNA-binding region (homeobox). The interval 978 to 1081 (KWRDDDSKST…DTNDPNGDML (104 aa)) is disordered. Residues 995–1006 (QQQDEQQKDNAH) are compositionally biased toward basic and acidic residues. The span at 1007–1041 (THSQSQIQDQNHSQNQAIHNSMSQDPYSNLHTTAM) shows a compositional bias: polar residues. The segment covering 1047 to 1056 (FDEDADMDLE) has biased composition (acidic residues). The span at 1057-1073 (LESHDFDLVDPDEHGDT) shows a compositional bias: basic and acidic residues.

It belongs to the CUT homeobox family. In terms of tissue distribution, neural-specific.

It localises to the nucleus. In terms of biological role, transcriptional regulator. Binds and recognize ATTG sites. The protein is Homeobox protein onecut (onecut) of Drosophila melanogaster (Fruit fly).